The primary structure comprises 405 residues: S-arrestin (405 aa).

Thr-234 carries the post-translational modification Phosphothreonine.

It belongs to the arrestin family. In terms of assembly, monomer. Homodimer. Homotetramer. Interacts with RHO (via the phosphorylated C-terminus). As to expression, detected in retina, in the proximal portion of the outer segment of rod photoreceptor cells (at protein level).

It localises to the cell projection. It is found in the cilium. The protein resides in the photoreceptor outer segment. Its subcellular location is the membrane. Functionally, binds to photoactivated, phosphorylated RHO and terminates RHO signaling via G-proteins by competing with G-proteins for the same binding site on RHO. May play a role in preventing light-dependent degeneration of retinal photoreceptor cells. The polypeptide is S-arrestin (SAG) (Homo sapiens (Human)).